We begin with the raw amino-acid sequence, 358 residues long: UDP-N-acetylglucosamine--N-acetylmuramyl-(pentapeptide) pyrophosphoryl-undecaprenol N-acetylglucosamine transferase (358 aa).

Residues 11–13 (TAG), Asn125, Arg162, Ser196, and Gln288 contribute to the UDP-N-acetyl-alpha-D-glucosamine site.

This sequence belongs to the glycosyltransferase 28 family. MurG subfamily.

It is found in the cell membrane. The catalysed reaction is di-trans,octa-cis-undecaprenyl diphospho-N-acetyl-alpha-D-muramoyl-L-alanyl-D-glutamyl-meso-2,6-diaminopimeloyl-D-alanyl-D-alanine + UDP-N-acetyl-alpha-D-glucosamine = di-trans,octa-cis-undecaprenyl diphospho-[N-acetyl-alpha-D-glucosaminyl-(1-&gt;4)]-N-acetyl-alpha-D-muramoyl-L-alanyl-D-glutamyl-meso-2,6-diaminopimeloyl-D-alanyl-D-alanine + UDP + H(+). It functions in the pathway cell wall biogenesis; peptidoglycan biosynthesis. Cell wall formation. Catalyzes the transfer of a GlcNAc subunit on undecaprenyl-pyrophosphoryl-MurNAc-pentapeptide (lipid intermediate I) to form undecaprenyl-pyrophosphoryl-MurNAc-(pentapeptide)GlcNAc (lipid intermediate II). The sequence is that of UDP-N-acetylglucosamine--N-acetylmuramyl-(pentapeptide) pyrophosphoryl-undecaprenol N-acetylglucosamine transferase from Leifsonia xyli subsp. xyli (strain CTCB07).